Consider the following 457-residue polypeptide: Mesentericin Y105 secretion protein MesE (457 aa).

Residues 22–42 form a helical membrane-spanning segment; it reads TLIIVPIFLLVVFIVLFSLFA.

Belongs to the membrane fusion protein (MFP) (TC 8.A.1) family.

The protein resides in the membrane. Involved in the secretion of mesentericin Y105. The sequence is that of Mesentericin Y105 secretion protein MesE (mesE) from Leuconostoc mesenteroides.